The chain runs to 373 residues: Beta sliding clamp (373 aa).

This sequence belongs to the beta sliding clamp family. In terms of assembly, forms a ring-shaped head-to-tail homodimer around DNA which binds and tethers DNA polymerases and other proteins to the DNA. The DNA replisome complex has a single clamp-loading complex (3 tau and 1 each of delta, delta', psi and chi subunits) which binds 3 Pol III cores (1 core on the leading strand and 2 on the lagging strand) each with a beta sliding clamp dimer. Additional proteins in the replisome are other copies of gamma, psi and chi, Ssb, DNA helicase and RNA primase.

It is found in the cytoplasm. Functionally, confers DNA tethering and processivity to DNA polymerases and other proteins. Acts as a clamp, forming a ring around DNA (a reaction catalyzed by the clamp-loading complex) which diffuses in an ATP-independent manner freely and bidirectionally along dsDNA. Initially characterized for its ability to contact the catalytic subunit of DNA polymerase III (Pol III), a complex, multichain enzyme responsible for most of the replicative synthesis in bacteria; Pol III exhibits 3'-5' exonuclease proofreading activity. The beta chain is required for initiation of replication as well as for processivity of DNA replication. This is Beta sliding clamp (dnaN) from Mycoplasmopsis pulmonis (strain UAB CTIP) (Mycoplasma pulmonis).